We begin with the raw amino-acid sequence, 1110 residues long: Nonribisomal peptide synthetase benY (1110 aa).

The adenylation stretch occupies residues 47–443; sequence RALEFPEKIA…GRKDHQLKVR (397 aa). In terms of domain architecture, Carrier spans 575-651; that stretch reads TLETESEKIL…EMAQSARVVP (77 aa). Serine 612 carries the O-(pantetheine 4'-phosphoryl)serine modification. The tract at residues 713–1025 is condensation; the sequence is YILDGDVDFD…IFHHQNIDTK (313 aa).

It belongs to the NRP synthetase family.

The protein operates within secondary metabolite biosynthesis. In terms of biological role, nonribisomal peptide synthetase; part of the gene cluster that mediates the biosynthesis of benzomalvin A and D. The pathway begins with the loading of amino acid precursors onto the A domains of the non ribosomal peptide synthetases benY and benZ. BenY and the A1 domain of benZ are loaded with anthranilate (Anth), while the A2 domain of benZ is loaded with phenylalanine (Phe). N-methylation of Phe by the methyltransferase benX may happen before loading of Phe onto benZ, after loading of Phe, or after dipeptide formation. Condensation of Anth with the secondary amine of NmPhe or Phe is catalyzed by the C1 domain of benZ, forming a dipeptide intermediate. This is followed by in trans condensation of the Anth-NmPhe dipeptide with Anth bound to the T domain of benY by the C2 domain of benZ to form the linear tripeptide Anth-NmPhe-Anth. Cyclization and release of the tripeptide is then catalyzed by the C-terminal C domain of benY and the resulting 11-member macrocyclic intermediate is expected to spontaneously collapse to form the benzodiazepine core. Benzomalvin A is in conformational equilibrium with its atropisomer, benzomalvin D. This Aspergillus terreus protein is Nonribisomal peptide synthetase benY.